The chain runs to 183 residues: MPTPTKGARLGGSPSHERLMLANLATSLFEHGKITTTEAKAKRLRPLAERLITKAKKGDLHNRREVMKTIRDKDVVHKLFAEIGPHFADRNGGYTRIVKAMPRRGDNAKMAVIALVTEKTVTAEAEAARGTKFAKDEKAKAEATEAKAEETTETTESTEAESTEAPAEEAKAEDTAAEKKDES.

Positions 130 to 150 are enriched in basic and acidic residues; the sequence is GTKFAKDEKAKAEATEAKAEE. The disordered stretch occupies residues 130 to 183; it reads GTKFAKDEKAKAEATEAKAEETTETTESTEAESTEAPAEEAKAEDTAAEKKDES. Over residues 151–162 the composition is skewed to acidic residues; sequence TTETTESTEAES. Residues 168–183 show a composition bias toward basic and acidic residues; that stretch reads EEAKAEDTAAEKKDES.

Belongs to the bacterial ribosomal protein bL17 family. Part of the 50S ribosomal subunit. Contacts protein L32.

This is Large ribosomal subunit protein bL17 from Saccharopolyspora erythraea (strain ATCC 11635 / DSM 40517 / JCM 4748 / NBRC 13426 / NCIMB 8594 / NRRL 2338).